Reading from the N-terminus, the 508-residue chain is Citrate lyase alpha chain (508 aa).

In terms of assembly, oligomer with a subunit composition of (alpha,beta,gamma)6.

Its subcellular location is the cytoplasm. It catalyses the reaction citrate = oxaloacetate + acetate. The catalysed reaction is citrate + acetyl-CoA = (3S)-citryl-CoA + acetate. Functionally, represents a citrate:acetyl-ACP transferase. In Klebsiella pneumoniae, this protein is Citrate lyase alpha chain (citF).